The chain runs to 1166 residues: Peroxisomal ATPase PEX6 (1166 aa).

This sequence belongs to the AAA ATPase family. In terms of assembly, interacts with PEX1; forming the PEX1-PEX6 AAA ATPase complex, which is composed of a heterohexamer formed by a trimer of PEX1-PEX6 dimers.

The protein resides in the membrane. It catalyses the reaction ATP + H2O = ADP + phosphate + H(+). Functionally, component of the PEX1-PEX6 AAA ATPase complex involved in peroxisome biosynthesis. The complex acts as a protein dislocase complex that mediates the ATP-dependent extraction of the PEX5 receptor from peroxisomal membranes, an essential step for PEX5 recycling. Specifically recognizes PEX5 monoubiquitinated at 'Cys-6', and pulls it out of the peroxisome lumen through the PEX2-PEX10-PEX12 retrotranslocation channel. Extraction by the PEX1-PEX6 AAA ATPase complex is accompanied by unfolding of the TPR repeats and release of bound cargo from PEX5. This Komagataella phaffii (strain GS115 / ATCC 20864) (Yeast) protein is Peroxisomal ATPase PEX6.